The sequence spans 91 residues: DNA-binding protein HU (91 aa).

The protein belongs to the bacterial histone-like protein family.

Functionally, histone-like DNA-binding protein which is capable of wrapping DNA to stabilize it, and thus to prevent its denaturation under extreme environmental conditions. Also seems to act as a fortuitous virulence factor in delayed sequelae by binding to heparan sulfate-proteoglycans in the extracellular matrix of target organs and acting as a nidus for in situ immune complex formation. This is DNA-binding protein HU (hup) from Streptococcus pyogenes serotype M1.